The chain runs to 274 residues: Triosephosphate isomerase (274 aa).

13-15 serves as a coordination point for substrate; the sequence is NWK. The active-site Electrophile is the His98. The Proton acceptor role is filled by Glu170. Residues Gly176 and Ser216 each contribute to the substrate site.

Belongs to the triosephosphate isomerase family. As to quaternary structure, homodimer.

The protein resides in the cytoplasm. The enzyme catalyses D-glyceraldehyde 3-phosphate = dihydroxyacetone phosphate. It functions in the pathway carbohydrate biosynthesis; gluconeogenesis. The protein operates within carbohydrate degradation; glycolysis; D-glyceraldehyde 3-phosphate from glycerone phosphate: step 1/1. Involved in the gluconeogenesis. Catalyzes stereospecifically the conversion of dihydroxyacetone phosphate (DHAP) to D-glyceraldehyde-3-phosphate (G3P). The sequence is that of Triosephosphate isomerase from Aster yellows witches'-broom phytoplasma (strain AYWB).